The chain runs to 87 residues: MEESGFREPVLDAKSEVTGQLIDFQWKLGMAVSSDSCRSLKYPYVAVMLKVADHSGQVSSKSIEMTIPQFQNFYKQFKEIAAVIETV.

An N-acetylmethionine modification is found at Met-1. The 68-residue stretch at 20–87 folds into the COMM domain; that stretch reads QLIDFQWKLG…KEIAAVIETV (68 aa).

Belongs to the COMM domain-containing protein 6 family. As to quaternary structure, component of the commander complex consisting of the CCC subcomplex and the retriever subcomplex. Component of the CCC (COMMD/CCDC22/CCDC93) subcomplex consisting of COMMD1, COMMD2, COMMD3, COMMD4, COMMD5, COMMD6, COMMD7, COMMD8, COMMD9, COMMD10, CCDC22 and CCDC93; within the complex forms a heterodimer with COMMD1. May form a homodimer with isoform 1. Interacts with RELA, RELB, NFKB1/p105. Does not interact with NFKBIB. Interacts with CCDC22, CCDC93, SCNN1B, CUL4A.

The protein localises to the nucleus. It localises to the cytoplasm. Functionally, scaffold protein in the commander complex that is essential for endosomal recycling of transmembrane cargos; the commander complex is composed of the CCC subcomplex and the retriever subcomplex. May modulate activity of cullin-RING E3 ubiquitin ligase (CRL) complexes. Down-regulates activation of NF-kappa-B. Inhibits TNF-induced NFKB1 activation. The chain is COMM domain-containing protein 6 (Commd6) from Mus musculus (Mouse).